Reading from the N-terminus, the 259-residue chain is 5'-nucleotidase SurE (259 aa).

Residues D8, D9, S39, and N95 each coordinate a divalent metal cation.

Belongs to the SurE nucleotidase family. The cofactor is a divalent metal cation.

It is found in the cytoplasm. It carries out the reaction a ribonucleoside 5'-phosphate + H2O = a ribonucleoside + phosphate. In terms of biological role, nucleotidase that shows phosphatase activity on nucleoside 5'-monophosphates. This chain is 5'-nucleotidase SurE, found in Pseudothermotoga lettingae (strain ATCC BAA-301 / DSM 14385 / NBRC 107922 / TMO) (Thermotoga lettingae).